Here is a 229-residue protein sequence, read N- to C-terminus: Uracil-DNA glycosylase (229 aa).

Aspartate 64 serves as the catalytic Proton acceptor.

The protein belongs to the uracil-DNA glycosylase (UDG) superfamily. UNG family. Monomer.

It is found in the cytoplasm. It carries out the reaction Hydrolyzes single-stranded DNA or mismatched double-stranded DNA and polynucleotides, releasing free uracil.. Functionally, excises uracil residues from the DNA which can arise as a result of misincorporation of dUMP residues by DNA polymerase or due to deamination of cytosine. This Escherichia coli O157:H7 protein is Uracil-DNA glycosylase.